The primary structure comprises 467 residues: UDP-N-acetylmuramate--L-alanine ligase (467 aa).

Position 121 to 127 (121 to 127 (GSHGKTT)) interacts with ATP.

It belongs to the MurCDEF family.

The protein localises to the cytoplasm. It catalyses the reaction UDP-N-acetyl-alpha-D-muramate + L-alanine + ATP = UDP-N-acetyl-alpha-D-muramoyl-L-alanine + ADP + phosphate + H(+). The protein operates within cell wall biogenesis; peptidoglycan biosynthesis. Functionally, cell wall formation. This is UDP-N-acetylmuramate--L-alanine ligase from Parasynechococcus marenigrum (strain WH8102).